The sequence spans 270 residues: BPI fold-containing family A member 1 (270 aa).

Residues 1 to 19 (MFLVGSLVVLCGLLAQSTA) form the signal peptide. The tract at residues 104-109 (LVGGLL) is important for surfactant activity and antibacterial properties. Asn-174 carries an N-linked (GlcNAc...) asparagine glycan. Cys-196 and Cys-238 are disulfide-bonded.

This sequence belongs to the BPI/LBP/Plunc superfamily. Plunc family. In terms of assembly, monomer. Interacts (via N-terminus) with SCNN1B, a subunit of the heterotrimeric epithelial sodium channel (ENaC); this inhibits proteolytic activation of ENaC. Detected in adult nasal epithelium, heart, lung, spleen, testis and salivary gland, and in embryonic nasal epithelium, lung, salivary gland and thymus.

It is found in the secreted. Lipid-binding protein which shows high specificity for the surfactant phospholipid dipalmitoylphosphatidylcholine (DPPC). Plays a role in the innate immune responses of the upper airways. Reduces the surface tension in secretions from airway epithelia and inhibits the formation of biofilm by pathogenic Gram-negative bacteria, such as P.aeruginosa and K.pneumoniae. Negatively regulates proteolytic cleavage of SCNN1G, an event that is required for activation of the epithelial sodium channel (ENaC), and thereby contributes to airway surface liquid homeostasis and proper clearance of mucus. Plays a role in the airway inflammatory response after exposure to irritants. May attract macrophages and neutrophils. The polypeptide is BPI fold-containing family A member 1 (Bpifa1) (Rattus norvegicus (Rat)).